Consider the following 549-residue polypeptide: DNA polymerase lambda (549 aa).

A BRCT domain is found at 17 to 116; sequence DPDGMFRGVS…ERLPEHKFAI (100 aa). The disordered stretch occupies residues 126–197; the sequence is KEGGAAGSGV…ASGDSKETIA (72 aa). Basic and acidic residues predominate over residues 149 to 175; it reads PENRKETAGGNRESRDAIAHPNEDSDV. Over residues 180-197 the composition is skewed to polar residues; that stretch reads STCTSSQSASGDSKETIA. The segment at 233–247 is DNA-binding; sequence NIYRALGDDRRSFSY. Histidine 280 is a catalytic residue. Residues 315 to 318 are DNA-binding; the sequence is GPAT. Residues arginine 356, 387-390, and 396-399 contribute to the dCTP site; these read SYRR and GDMD. An involved in primer binding region spans residues 390–399; sequence RGKSSCGDMD. 3 residues coordinate Mn(2+): aspartate 397, aspartate 399, and aspartate 464. The segment at 438–479 is DNA-binding; it reads IEGTDCGVDTYFGLCTYPGRELRHRIDLKVYPRNRHAFGLLA. Position 487 (asparagine 487) interacts with dCTP.

The protein belongs to the DNA polymerase type-X family. Interacts with PCNA. Mn(2+) serves as cofactor. Expressed in proliferating tissues. Expressed in roots, root apex, young leaves, shoot apical meristem (SAM), flag leaves and panicles.

It localises to the nucleus. It carries out the reaction DNA(n) + a 2'-deoxyribonucleoside 5'-triphosphate = DNA(n+1) + diphosphate. Repair polymerase involved in base excision repair (BER) and responsible for repair of lesions that give rise to abasic (AP) sites in DNA. Has both DNA polymerase and terminal transferase activities. Has a 5'-deoxyribose-5-phosphate lyase (dRP lyase) activity. This Oryza sativa subsp. japonica (Rice) protein is DNA polymerase lambda.